A 305-amino-acid chain; its full sequence is tRNA pseudouridine synthase B (305 aa).

Asp38 (nucleophile) is an active-site residue.

The protein belongs to the pseudouridine synthase TruB family. Type 1 subfamily.

It catalyses the reaction uridine(55) in tRNA = pseudouridine(55) in tRNA. Functionally, responsible for synthesis of pseudouridine from uracil-55 in the psi GC loop of transfer RNAs. The polypeptide is tRNA pseudouridine synthase B (Latilactobacillus sakei subsp. sakei (strain 23K) (Lactobacillus sakei subsp. sakei)).